Here is a 172-residue protein sequence, read N- to C-terminus: Disulfide bond formation protein B (172 aa).

Residues 1 to 11 (MNPFRWGFRAQ) are Cytoplasmic-facing. Residues 12–28 (FLLGFLACAGLLAYAIY) form a helical membrane-spanning segment. At 29-46 (VQLHLGLEPCPLCIFQRI) the chain is on the periplasmic side. Cysteine 38 and cysteine 41 are disulfide-bonded. Residues 47–63 (AFATLALLFLLGALHGP) traverse the membrane as a helical segment. Residues 64–70 (RGAGGRK) are Cytoplasmic-facing. The helical transmembrane segment at 71-88 (AYGVLAFIAAGVGMGIAA) threads the bilayer. Residues 89 to 145 (RHVWVQIRPKDMMSSCGPPLSFLSETMGPFEVFRTVLTGTGDCGNIDWRFLGLSMPM) are Periplasmic-facing. An intrachain disulfide couples cysteine 104 to cysteine 131. The helical transmembrane segment at 146 to 164 (WSMVWFVGLALWALYAGFK) threads the bilayer. Residues 165-172 (HRGPRKLF) lie on the Cytoplasmic side of the membrane.

The protein belongs to the DsbB family.

The protein resides in the cell inner membrane. Required for disulfide bond formation in some periplasmic proteins. Acts by oxidizing the DsbA protein. The protein is Disulfide bond formation protein B of Xanthomonas campestris pv. campestris (strain 8004).